A 349-amino-acid polypeptide reads, in one-letter code: Adenosine deaminase (349 aa).

The Zn(2+) site is built by His25 and His27. Substrate is bound by residues His27, Asp29, and Gly182. His209 is a Zn(2+) binding site. Glu212 (proton donor) is an active-site residue. Asp289 is a binding site for Zn(2+).

It belongs to the metallo-dependent hydrolases superfamily. Adenosine and AMP deaminases family. Adenosine deaminase subfamily. The cofactor is Zn(2+).

It catalyses the reaction adenosine + H2O + H(+) = inosine + NH4(+). The enzyme catalyses 2'-deoxyadenosine + H2O + H(+) = 2'-deoxyinosine + NH4(+). Its function is as follows. Catalyzes the hydrolytic deamination of adenosine and 2-deoxyadenosine. In Streptococcus mutans serotype c (strain ATCC 700610 / UA159), this protein is Adenosine deaminase.